A 62-amino-acid polypeptide reads, in one-letter code: Large ribosomal subunit protein bL28 (62 aa).

It belongs to the bacterial ribosomal protein bL28 family.

This chain is Large ribosomal subunit protein bL28, found in Streptococcus equi subsp. equi (strain 4047).